The primary structure comprises 299 residues: Undecaprenyl-diphosphatase (299 aa).

8 helical membrane-spanning segments follow: residues 10-32 (LFSLMILLAATSELLAACWRNLV), 63-83 (PGVSATAVIQLGSILAVIAYF), 112-132 (LAIAIGTMPILLAGMAIKLFW), 143-163 (LPSIAVVSIVMALLLALAESF), 178-198 (GFVVGLAQALALIPGVSRSGS), 213-233 (AARFCFLLGIPAITLAGLVEL), 243-263 (GGVLPLLVGIVSAAFVSWLAI), and 276-296 (WIFVVYRLLFGVLVLAWWLSG).

The protein belongs to the UppP family.

It is found in the cell inner membrane. The enzyme catalyses di-trans,octa-cis-undecaprenyl diphosphate + H2O = di-trans,octa-cis-undecaprenyl phosphate + phosphate + H(+). Its function is as follows. Catalyzes the dephosphorylation of undecaprenyl diphosphate (UPP). Confers resistance to bacitracin. In Prochlorococcus marinus (strain MIT 9313), this protein is Undecaprenyl-diphosphatase.